Reading from the N-terminus, the 136-residue chain is Nucleoside diphosphate kinase (136 aa).

Residues Lys10, Phe58, Arg86, Thr92, Arg104, and Asn114 each coordinate ATP. The active-site Pros-phosphohistidine intermediate is the His117.

Belongs to the NDK family. As to quaternary structure, homotetramer. Requires Mg(2+) as cofactor.

The protein localises to the cytoplasm. It carries out the reaction a 2'-deoxyribonucleoside 5'-diphosphate + ATP = a 2'-deoxyribonucleoside 5'-triphosphate + ADP. The enzyme catalyses a ribonucleoside 5'-diphosphate + ATP = a ribonucleoside 5'-triphosphate + ADP. In terms of biological role, major role in the synthesis of nucleoside triphosphates other than ATP. The ATP gamma phosphate is transferred to the NDP beta phosphate via a ping-pong mechanism, using a phosphorylated active-site intermediate. The chain is Nucleoside diphosphate kinase from Corynebacterium efficiens (strain DSM 44549 / YS-314 / AJ 12310 / JCM 11189 / NBRC 100395).